The sequence spans 482 residues: Glutamate--tRNA ligase (482 aa).

The 'HIGH' region motif lies at 9-19 (PSPTGYLHIGG). The 'KMSKS' region signature appears at 252–256 (KLSKR). Residue K255 coordinates ATP.

Belongs to the class-I aminoacyl-tRNA synthetase family. Glutamate--tRNA ligase type 1 subfamily. As to quaternary structure, monomer.

It localises to the cytoplasm. It catalyses the reaction tRNA(Glu) + L-glutamate + ATP = L-glutamyl-tRNA(Glu) + AMP + diphosphate. In terms of biological role, catalyzes the attachment of glutamate to tRNA(Glu) in a two-step reaction: glutamate is first activated by ATP to form Glu-AMP and then transferred to the acceptor end of tRNA(Glu). This chain is Glutamate--tRNA ligase, found in Ureaplasma parvum serovar 3 (strain ATCC 27815 / 27 / NCTC 11736).